The sequence spans 218 residues: Guanylate kinase (218 aa).

In terms of domain architecture, Guanylate kinase-like spans 10-190 (GLLIILSSPS…TEERLKTIIT (181 aa)). 17 to 24 (SPSGAGKS) provides a ligand contact to ATP.

This sequence belongs to the guanylate kinase family.

It is found in the cytoplasm. The enzyme catalyses GMP + ATP = GDP + ADP. Functionally, essential for recycling GMP and indirectly, cGMP. The polypeptide is Guanylate kinase (Jannaschia sp. (strain CCS1)).